A 326-amino-acid chain; its full sequence is ATP synthase gamma chain (326 aa).

The protein belongs to the ATPase gamma chain family. In terms of assembly, F-type ATPases have 2 components, CF(1) - the catalytic core - and CF(0) - the membrane proton channel. CF(1) has five subunits: alpha(3), beta(3), gamma(1), delta(1), epsilon(1). CF(0) has three main subunits: a, b and c.

It is found in the cell membrane. In terms of biological role, produces ATP from ADP in the presence of a proton gradient across the membrane. The gamma chain is believed to be important in regulating ATPase activity and the flow of protons through the CF(0) complex. The protein is ATP synthase gamma chain of Corynebacterium efficiens (strain DSM 44549 / YS-314 / AJ 12310 / JCM 11189 / NBRC 100395).